A 206-amino-acid polypeptide reads, in one-letter code: Potassium channel B446_29190 (206 aa).

Residue M1 is a topological domain, cytoplasmic. A helical transmembrane segment spans residues 2-25; sequence NESGRVEAFSDGVFAIAITLLILD. A RxxxFSD motif motif is present at residues 6–12; it reads RVEAFSD. Residues 26-44 are Extracellular-facing; sequence IKVPKADGPGGLWHALGAQ. A short helix H1 region spans residues 31 to 34; sequence ADGP. The segment at 36 to 42 is short helix H2; the sequence is GLWHALG. The chain crosses the membrane as a helical span at residues 45–70; the sequence is WPSYAAYVVSFLVIGIMWVNHHQVFS. The Cytoplasmic portion of the chain corresponds to 71 to 76; the sequence is YVARVD. Residues 77–102 traverse the membrane as a helical segment; the sequence is RALMFLNLLVLMVVAAVPWPTAMLAE. Over 103–110 the chain is Extracellular; it reads YLREDRAS. A helical transmembrane segment spans residues 111 to 135; sequence HVAAAVYSLVMVAMALAFQALWWHL. Residues 136–147 lie on the Cytoplasmic side of the membrane; sequence TRTGHLFDPRVD. A helical membrane pass occupies residues 148 to 174; that stretch reads APAARATRIRFALGSLGYPLTVGLAFV. Topologically, residues 175 to 176 are extracellular; the sequence is SA. A helical membrane pass occupies residues 177–192; sequence PLTLAAHGLLALYYGF. Topologically, residues 193–206 are cytoplasmic; that stretch reads NQVPVPTREAAAPS.

The protein belongs to the TMEM175 family. As to quaternary structure, homotetramer.

The protein resides in the membrane. The catalysed reaction is K(+)(in) = K(+)(out). Potassium channel. The polypeptide is Potassium channel B446_29190 (Streptomyces collinus (strain DSM 40733 / Tue 365)).